The primary structure comprises 487 residues: 1,4-beta-D-glucan cellobiohydrolase CEL6A (487 aa).

A signal peptide spans 1 to 17 (MASKLFLAAALLQGALS). One can recognise a CBM1 domain in the interval 27 to 63 (ACAAQWGQCGGQDYTGPTCCQSGSTCVVSNQWYSQCL). Disulfide bonds link C35–C52 and C46–C62. The span at 64–117 (PGSSNPTTTSRTSTSSSSSTSRTSSSTSRPPSSVPTTPTSVPPTITTTPTTTPT) shows a compositional bias: low complexity. Residues 64-127 (PGSSNPTTTS…GGSGPGTTAS (64 aa)) form a disordered region. Substrate is bound by residues W175 and D177. D216 is an active-site residue. The Proton donor role is filled by D262. Positions 307, 310, 346, 407, 435, and 439 each coordinate substrate. D441 acts as the Proton acceptor in catalysis.

Belongs to the glycosyl hydrolase 6 (cellulase B) family.

The protein resides in the secreted. The enzyme catalyses Hydrolysis of (1-&gt;4)-beta-D-glucosidic linkages in cellulose and cellotetraose, releasing cellobiose from the non-reducing ends of the chains.. In terms of biological role, exoglucanase that plays an important function in biomass degradation by catalyzing the hydrolysis of the non-reducing end beta-1,4-glucosidic linkages in cellulose and cellotetraose to release cellobiose. Shows higher hydrolytic activities on phosphoric acid-swollen cellulose (PSC), beta-glucan, and cellooligosaccharide derivatives than on cellulose, of which the best substrates were cellooligosaccharides. The chain is 1,4-beta-D-glucan cellobiohydrolase CEL6A from Pyricularia oryzae (strain 70-15 / ATCC MYA-4617 / FGSC 8958) (Rice blast fungus).